The following is a 193-amino-acid chain: Ion-translocating oxidoreductase complex subunit B (193 aa).

The segment at 1–26 is hydrophobic; it reads MSTMLIAVILLTLLALFFGVLLGFAA. In terms of domain architecture, 4Fe-4S spans 32–90; that stretch reads EGNPIVDELEAILPQTQCGQCGYPGCRPYAEAIANGDKVNKCPPGGTATMEKLASLMGV. 12 residues coordinate [4Fe-4S] cluster: cysteine 49, cysteine 52, cysteine 57, cysteine 73, cysteine 114, cysteine 117, cysteine 120, cysteine 124, cysteine 144, cysteine 147, cysteine 150, and cysteine 154. 4Fe-4S ferredoxin-type domains lie at 105-134 and 136-164; these read KVAY…GAGK and MHTV…MLPV.

The protein belongs to the 4Fe4S bacterial-type ferredoxin family. RnfB subfamily. In terms of assembly, the complex is composed of six subunits: RnfA, RnfB, RnfC, RnfD, RnfE and RnfG. [4Fe-4S] cluster serves as cofactor.

The protein localises to the cell inner membrane. In terms of biological role, part of a membrane-bound complex that couples electron transfer with translocation of ions across the membrane. This chain is Ion-translocating oxidoreductase complex subunit B, found in Shewanella sp. (strain MR-4).